We begin with the raw amino-acid sequence, 313 residues long: Fe-S cluster assembly protein dre2 (313 aa).

Disordered stretches follow at residues 1–25 (MSIT…SQKR) and 151–187 (GRKK…AQNN). Residues 20-145 (NGSQKRNLLL…FEKPVQEAAV (126 aa)) are N-terminal SAM-like domain. The segment at 146–203 (PLKLGGRKKKDKTNGVNGVQNGVATNGASTNGVGMFDPAQNNDDELIDEDALLSDDDL) is linker. Polar residues predominate over residues 159–177 (NGVNGVQNGVATNGASTNG). [2Fe-2S] cluster is bound by residues C213, C225, C228, and C230. The interval 213–230 (CVPETAKKRRRPCKDCTC) is fe-S binding site A. [4Fe-4S] cluster contacts are provided by C276, C279, C287, and C290. 2 short sequence motifs (cx2C motif) span residues 276–279 (CNSC) and 287–290 (CSSC). The fe-S binding site B stretch occupies residues 276–290 (CNSCSLGDAFRCSSC).

Belongs to the anamorsin family. As to quaternary structure, monomer. Interacts with tah18. Interacts with mia40. The cofactor is [2Fe-2S] cluster. It depends on [4Fe-4S] cluster as a cofactor.

The protein localises to the cytoplasm. Its subcellular location is the mitochondrion intermembrane space. Component of the cytosolic iron-sulfur (Fe-S) protein assembly (CIA) machinery required for the maturation of extramitochondrial Fe-S proteins. Part of an electron transfer chain functioning in an early step of cytosolic Fe-S biogenesis, facilitating the de novo assembly of a [4Fe-4S] cluster on the scaffold complex cfd1-nbp35. Electrons are transferred to dre2 from NADPH via the FAD- and FMN-containing protein tah18. Tah18-dre2 are also required for the assembly of the diferric tyrosyl radical cofactor of ribonucleotide reductase (RNR), probably by providing electrons for reduction during radical cofactor maturation in the catalytic small subunit rnr2. This chain is Fe-S cluster assembly protein dre2, found in Aspergillus oryzae (strain ATCC 42149 / RIB 40) (Yellow koji mold).